Here is a 31-residue protein sequence, read N- to C-terminus: Potassium channel toxin alpha-KTx 19.2 (31 aa).

Disulfide bonds link Cys3/Cys22, Cys8/Cys27, and Cys12/Cys29.

The protein belongs to the short scorpion toxin superfamily. Potassium channel inhibitor family. Alpha-KTx 19 subfamily. In terms of assembly, monomer. As to expression, expressed by the venom gland.

It is found in the secreted. Its function is as follows. Blocks voltage-gated potassium channels rKv1.1/KCNA1, rKv1.2/KCNA2, hKv1.3/KCNA3, rKv1.6/KCNA6 (IC(50)=75.9 nM) and, to a lesser extent, Shaker IR (with the inactivation domain removed). The polypeptide is Potassium channel toxin alpha-KTx 19.2 (Buthus occitanus tunetanus (Common European scorpion)).